The primary structure comprises 421 residues: Imidazolonepropionase (421 aa).

Fe(3+) is bound by residues His-81 and His-83. The Zn(2+) site is built by His-81 and His-83. Residues Arg-90, Tyr-153, and His-186 each coordinate 4-imidazolone-5-propanoate. Tyr-153 is a binding site for N-formimidoyl-L-glutamate. A Fe(3+)-binding site is contributed by His-251. A Zn(2+)-binding site is contributed by His-251. Residue Glu-254 participates in 4-imidazolone-5-propanoate binding. Asp-326 provides a ligand contact to Fe(3+). Residue Asp-326 coordinates Zn(2+). Residues Asn-328 and Gly-330 each coordinate N-formimidoyl-L-glutamate. Position 331 (Ser-331) interacts with 4-imidazolone-5-propanoate.

Belongs to the metallo-dependent hydrolases superfamily. HutI family. Requires Zn(2+) as cofactor. It depends on Fe(3+) as a cofactor.

The protein resides in the cytoplasm. The enzyme catalyses 4-imidazolone-5-propanoate + H2O = N-formimidoyl-L-glutamate. It functions in the pathway amino-acid degradation; L-histidine degradation into L-glutamate; N-formimidoyl-L-glutamate from L-histidine: step 3/3. In terms of biological role, catalyzes the hydrolytic cleavage of the carbon-nitrogen bond in imidazolone-5-propanoate to yield N-formimidoyl-L-glutamate. It is the third step in the universal histidine degradation pathway. This is Imidazolonepropionase from Streptococcus pyogenes serotype M18 (strain MGAS8232).